Reading from the N-terminus, the 367-residue chain is Phosphoribosylaminoimidazole-succinocarboxamide synthase (367 aa).

It belongs to the SAICAR synthetase family.

It catalyses the reaction 5-amino-1-(5-phospho-D-ribosyl)imidazole-4-carboxylate + L-aspartate + ATP = (2S)-2-[5-amino-1-(5-phospho-beta-D-ribosyl)imidazole-4-carboxamido]succinate + ADP + phosphate + 2 H(+). Its pathway is purine metabolism; IMP biosynthesis via de novo pathway; 5-amino-1-(5-phospho-D-ribosyl)imidazole-4-carboxamide from 5-amino-1-(5-phospho-D-ribosyl)imidazole-4-carboxylate: step 1/2. The sequence is that of Phosphoribosylaminoimidazole-succinocarboxamide synthase from Aeromonas salmonicida (strain A449).